The following is a 522-amino-acid chain: Probable mannosyltransferase KTR5 (522 aa).

Topologically, residues Met1–His16 are cytoplasmic. The helical; Signal-anchor for type II membrane protein transmembrane segment at Cys17–Val37 threads the bilayer. Residues Ser38–Tyr82 are stem region. The Lumenal portion of the chain corresponds to Ser38–Asn522. The interval Ile83 to Asn522 is catalytic. Asn86 carries N-linked (GlcNAc...) asparagine glycosylation. Glu363 (nucleophile) is an active-site residue.

Belongs to the glycosyltransferase 15 family.

The protein localises to the membrane. Possible glycosyltransferase that transfers an alpha-D-mannosyl residue from GDP-mannose into lipid-linked oligosaccharide, forming an alpha-(1-&gt;2)-D-mannosyl-D-mannose linkage. This is Probable mannosyltransferase KTR5 (KTR5) from Saccharomyces cerevisiae (strain ATCC 204508 / S288c) (Baker's yeast).